A 618-amino-acid polypeptide reads, in one-letter code: Poly(A)-specific ribonuclease PARN-like (618 aa).

A divalent metal cation contacts are provided by Ser54, Gln56, Asp332, and Asn418. Residues 588 to 607 are disordered; sequence ALESSDTDPDSDTKPSEIDW.

Belongs to the CAF1 family. A divalent metal cation serves as cofactor.

The protein resides in the nucleus. Its subcellular location is the cytoplasm. It catalyses the reaction Exonucleolytic cleavage of poly(A) to 5'-AMP.. Functionally, 3'-exoribonuclease that has a preference for poly(A) tails of mRNAs, thereby efficiently degrading poly(A) tails. Exonucleolytic degradation of the poly(A) tail is often the first step in the decay of eukaryotic mRNAs. This Arabidopsis thaliana (Mouse-ear cress) protein is Poly(A)-specific ribonuclease PARN-like.